Here is a 1105-residue protein sequence, read N- to C-terminus: Serine/threonine-protein kinase Warts (1105 aa).

Positions 33-54 (VQNNHRNNQNYTPLRYTATNGR) are enriched in polar residues. Disordered regions lie at residues 33–81 (VQNN…APDV), 145–253 (CSPA…TQNG), 273–362 (GGGS…YQAR), 383–462 (QTAV…EPPS), and 514–643 (AQRE…RKEF). The segment covering 69–81 (MEPPPSASPAPDV) has biased composition (pro residues). The segment covering 242–253 (QRGNSPVITQNG) has biased composition (polar residues). Residues 307–320 (SMQSRQSPTQSQQS) show a composition bias toward low complexity. Positions 325–343 (SPSSGIYSATSAGSPSPIT) are enriched in polar residues. 2 stretches are compositionally biased toward low complexity: residues 387–400 (APQSPSSASASNSP) and 415–437 (AAVVQQQQQAAAAAHQQQHQHQQ). The segment covering 515–533 (QRERDQRERDQRERERDQQ) has biased composition (basic and acidic residues). Low complexity-rich tracts occupy residues 551–576 (QSNNNNNSEIKPPSCNNNNIQISNSN) and 589–616 (NNNSSNTGANSSGGSNGSTGTTASSSTS). Residues 627 to 643 (PERKKISKEKEEERKEF) show a composition bias toward basic and acidic residues. A Protein kinase domain is found at 719–1020 (FVKLKPIGVG…VDEVKSHDFF (302 aa)). ATP is bound by residues 725-733 (IGVGAFGEV) and Lys749. Catalysis depends on Asp843, which acts as the Proton acceptor. Disordered regions lie at residues 881–900 (GNHSRQDSMEPWEEYSENGP) and 1038–1070 (EIKHPTDTSNFDPVDPEKLRSNDSTMSSGDDVD). The AGC-kinase C-terminal domain maps to 1021-1091 (KGIDFADMRK…FTFRRFFDDK (71 aa)).

Belongs to the protein kinase superfamily. AGC Ser/Thr protein kinase family. In terms of assembly, interacts with yki. Interacts with jub. Mg(2+) is required as a cofactor.

Its subcellular location is the cytoplasm. The protein resides in the cytosol. It localises to the cytoskeleton. It is found in the microtubule organizing center. The protein localises to the centrosome. The enzyme catalyses L-seryl-[protein] + ATP = O-phospho-L-seryl-[protein] + ADP + H(+). It carries out the reaction L-threonyl-[protein] + ATP = O-phospho-L-threonyl-[protein] + ADP + H(+). Its function is as follows. Negative regulator of Yorkie (Yki) in the Hippo/SWH (Sav/Wts/Hpo) signaling pathway that plays a pivotal role in organ size control and tumor suppression by restricting proliferation and promoting apoptosis. The core of this pathway is composed of a kinase cascade wherein Hippo (Hpo), in complex with its regulatory protein Salvador (Sav), phosphorylates and activates Warts (Wts) in complex with its regulatory protein Mats, which in turn phosphorylates and inactivates the Yorkie (Yki) oncoprotein. The Hippo/SWH signaling pathway inhibits the activity of the transcriptional complex formed by Scalloped (sd) and Yki and the target genes of this pathway include cyclin-E (cycE), diap1 and bantam. Inhibits nuclear localization of Yki. Regulates salivary gland degradation in a PI3K-dependent manner and Yki- and Sd-independent, mechanism. In Drosophila melanogaster (Fruit fly), this protein is Serine/threonine-protein kinase Warts (wts).